The chain runs to 509 residues: Maturase K (509 aa).

This sequence belongs to the intron maturase 2 family. MatK subfamily.

It is found in the plastid. It localises to the chloroplast. Its function is as follows. Usually encoded in the trnK tRNA gene intron. Probably assists in splicing its own and other chloroplast group II introns. This is Maturase K from Thujopsis dolabrata (Hiba arborvitae).